A 261-amino-acid chain; its full sequence is Mannose-specific lectin 2 (261 aa).

The first 23 residues, methionine 1–alanine 23, serve as a signal peptide directing secretion. Bulb-type lectin domains are found at residues threonine 26–proline 131 and aspartate 145–serine 252. Beta-D-mannose-binding positions include glutamine 51–asparagine 55, tyrosine 59, tryptophan 63, glutamine 64, glutamine 170–asparagine 174, tyrosine 178, and tyrosine 182–glutamine 185. Positions glutamine 51–tyrosine 59 match the Carbohydrate-binding motif 1 motif. Cystine bridges form between cysteine 54-cysteine 74 and cysteine 173-cysteine 195. Residues glutamine 170 to tyrosine 178 carry the Carbohydrate-binding motif 2 motif.

Forms heterotetramer of 2 chains 1 and 2 chains 2 arranged as a dimer of chain 1 and chain 2 heterodimers.

Mannose-specific lectin. Shows agglutinating activity towards erythrocytes from rabbit. In Colocasia esculenta (Wild taro), this protein is Mannose-specific lectin 2.